We begin with the raw amino-acid sequence, 337 residues long: Metacaspase III c (337 aa).

2 propeptides span residues methionine 1–arginine 6 and valine 116–arginine 125. Residue cysteine 202 is modified to Cysteine sulfenic acid (-SOH). A disulfide bridge connects residues cysteine 202 and cysteine 259. The active site involves histidine 207. Positions 224, 240, and 241 each coordinate Ca(2+). Residue cysteine 264 is part of the active site. Aspartate 271 is a Ca(2+) binding site. The propeptide occupies asparagine 290 to glycine 337.

The protein belongs to the peptidase C14B family. Auto-proteolytic cleavage into a large and a small subunit which probably remain associated by non-covalent bonds. Post-translationally, following oxidative stress, the oxidation of Cys-202 leads to the formation of a disulfide bond between Cys-202 and Cys-259 which enhances catalytic activity.

Its activity is regulated as follows. Activated by Ca(2+). Cysteine protease that cleaves specifically after arginine residues. This chain is Metacaspase III c, found in Phaeodactylum tricornutum (strain CCAP 1055/1).